A 128-amino-acid polypeptide reads, in one-letter code: Large ribosomal subunit protein bL17 (128 aa).

Belongs to the bacterial ribosomal protein bL17 family. As to quaternary structure, part of the 50S ribosomal subunit. Contacts protein L32.

This is Large ribosomal subunit protein bL17 from Vibrio cholerae serotype O1 (strain ATCC 39541 / Classical Ogawa 395 / O395).